Here is a 141-residue protein sequence, read N- to C-terminus: Large ribosomal subunit protein bL17 (141 aa).

The protein belongs to the bacterial ribosomal protein bL17 family. In terms of assembly, part of the 50S ribosomal subunit. Contacts protein L32.

The polypeptide is Large ribosomal subunit protein bL17 (Sinorhizobium fredii (strain NBRC 101917 / NGR234)).